We begin with the raw amino-acid sequence, 95 residues long: Stationary phase-expressed protein 1 (95 aa).

The chain crosses the membrane as a helical span at residues 20 to 38 (FRYIMLGLVGAAVVPTAYM).

Its subcellular location is the mitochondrion membrane. The chain is Stationary phase-expressed protein 1 (SPG1) from Saccharomyces cerevisiae (strain RM11-1a) (Baker's yeast).